The following is a 178-amino-acid chain: GTP-dependent dephospho-CoA kinase (178 aa).

The GTP site is built by aspartate 55, valine 57, aspartate 74, lysine 76, and glutamate 127.

The protein belongs to the GTP-dependent DPCK family.

The catalysed reaction is 3'-dephospho-CoA + GTP = GDP + CoA + H(+). It functions in the pathway cofactor biosynthesis; coenzyme A biosynthesis. Functionally, catalyzes the GTP-dependent phosphorylation of the 3'-hydroxyl group of dephosphocoenzyme A to form coenzyme A (CoA). In Saccharolobus islandicus (strain Y.N.15.51 / Yellowstone #2) (Sulfolobus islandicus), this protein is GTP-dependent dephospho-CoA kinase.